A 648-amino-acid polypeptide reads, in one-letter code: DNA polymerase (648 aa).

It belongs to the DNA polymerase type-A family.

It carries out the reaction DNA(n) + a 2'-deoxyribonucleoside 5'-triphosphate = DNA(n+1) + diphosphate. In terms of biological role, replicates the viral genomic DNA. This polymerase possesses two enzymatic activities: DNA synthesis (polymerase) and an exonucleolytic activity that degrades single-stranded DNA in the 3'-5' direction. The chain is DNA polymerase (L) from Bacillus subtilis (Bacteriophage SP02).